Here is a 231-residue protein sequence, read N- to C-terminus: dTTP/UTP pyrophosphatase (231 aa).

Residue Asp81 is the Proton acceptor of the active site.

Belongs to the Maf family. YhdE subfamily. Requires a divalent metal cation as cofactor.

The protein localises to the cytoplasm. It carries out the reaction dTTP + H2O = dTMP + diphosphate + H(+). The catalysed reaction is UTP + H2O = UMP + diphosphate + H(+). Its function is as follows. Nucleoside triphosphate pyrophosphatase that hydrolyzes dTTP and UTP. May have a dual role in cell division arrest and in preventing the incorporation of modified nucleotides into cellular nucleic acids. The protein is dTTP/UTP pyrophosphatase of Lawsonia intracellularis (strain PHE/MN1-00).